A 372-amino-acid chain; its full sequence is Protein phosphatase Mn(2+)-dependent 1K (372 aa).

Residues 1 to 29 (MLSAAFITLLRSGGNQVKKRVLLSSILLQ) constitute a mitochondrion transit peptide. The tract at residues 46 to 61 (RCSRFDPDGSGQPATW) is critical for association with the BCKDH complex. In terms of domain architecture, PPM-type phosphatase spans 94-346 (NVGCASLIGK…DNSTAVVVPF (253 aa)). Residues Asp127 and Gly128 each coordinate Mn(2+). The residue at position 248 (Ser248) is a Phosphoserine. Residues Asp298 and Asp337 each contribute to the Mn(2+) site.

The protein belongs to the PP2C family. As to quaternary structure, monomer. Interacts with E1 and E2 components of the branched-chain alpha-ketoacid dehydrogenase (BCKDH) complex; this interaction requires colocalization in mitochondria. Interacts with BCKDHA but not with BCKDHB of the E1 component. Interacts with the 24-meric E2 core composed of DBT monomers with a 24:1 stoichiometry; the N-terminal region (residues 49-61) of PPM1K and C-terminal linker of the lipoyl domain of DBT (residues 145-160) are critical for this interaction, whereas the lipoyl prosthetic group is dispensable. Competes with BCKDK for binding to the E2 core; this interaction is modulated by branched-chain alpha-keto acids. At steady state, BCKDH holoenzyme preferentially binds BCKDK and BCKDHA is phosphorylated. In response to high levels of branched-chain alpha-keto acids, the inhibitory BCKDK is replaced by activating PPM1K leading to BCKDHA dephosphorylation and BCAA degradation. Mn(2+) is required as a cofactor. As to expression, highly expressed in the heart, kidney, brain and liver and to a lesser extent in testis, lung, spleen and adipose tissue. Very low amount in muscle (at protein level). Also expressed in the thymus (at protein level) and the diaphragm. Significantly reduced in hypertrophied hearts.

The protein localises to the mitochondrion matrix. It catalyses the reaction O-phospho-L-seryl-[3-methyl-2-oxobutanoate dehydrogenase] + H2O = L-seryl-[3-methyl-2-oxobutanoate dehydrogenase] + phosphate. It carries out the reaction O-phospho-L-seryl-[protein] + H2O = L-seryl-[protein] + phosphate. It functions in the pathway protein modification. Its function is as follows. Serine/threonine-protein phosphatase component of macronutrients metabolism. Forms a functional kinase and phosphatase pair with BCKDK, serving as a metabolic regulatory node that coordinates branched-chain amino acids (BCAAs) with glucose and lipid metabolism via two distinct phosphoprotein targets: mitochondrial BCKDHA subunit of the branched-chain alpha-ketoacid dehydrogenase (BCKDH) complex and cytosolic ACLY, a lipogenic enzyme of Krebs cycle. At high levels of branched-chain ketoacids, dephosphorylates and activates mitochondrial BCKDH complex, a multisubunit complex consisting of three multimeric components each involved in different steps of BCAA catabolism: E1 composed of BCKDHA and BCKDHB, E2 core composed of DBT monomers, and E3 composed of DLD monomers. Tightly associates with the E2 component of BCKDH complex and dephosphorylates BCKDHA on Ser-334. Regulates the reversible phosphorylation of ACLY in response to changes in cellular carbohydrate abundance such as occurs during fasting to feeding metabolic transition. At fasting state, appears to dephosphorylate ACLY on Ser-455 and inactivate it. Refeeding stimulates MLXIPL/ChREBP transcription factor, leading to increased BCKDK to PPM1K expression ratio, phosphorylation and activation of ACLY that ultimately results in the generation of malonyl-CoA and oxaloacetate immediate substrates of de novo lipogenesis and gluconeogenesis, respectively. Recognizes phosphosites having SxS or RxxS motifs and strictly depends on Mn(2+) ions for the phosphatase activity. Regulates Ca(2+)-induced opening of mitochondrial transition pore and apoptotic cell death. The chain is Protein phosphatase Mn(2+)-dependent 1K from Mus musculus (Mouse).